We begin with the raw amino-acid sequence, 353 residues long: tRNA pseudouridine synthase B (353 aa).

D39 acts as the Nucleophile in catalysis.

Belongs to the pseudouridine synthase TruB family. Type 1 subfamily.

It catalyses the reaction uridine(55) in tRNA = pseudouridine(55) in tRNA. Its function is as follows. Responsible for synthesis of pseudouridine from uracil-55 in the psi GC loop of transfer RNAs. The protein is tRNA pseudouridine synthase B of Wolbachia pipientis subsp. Culex pipiens (strain wPip).